Here is a 116-residue protein sequence, read N- to C-terminus: NADH-ubiquinone oxidoreductase chain 3 (116 aa).

The next 3 membrane-spanning stretches (helical) occupy residues 3–23 (LLMT…IVSF), 56–76 (FFLI…LLPL), and 85–105 (PLLT…GLIY).

Belongs to the complex I subunit 3 family.

It is found in the mitochondrion membrane. It carries out the reaction a ubiquinone + NADH + 5 H(+)(in) = a ubiquinol + NAD(+) + 4 H(+)(out). Functionally, core subunit of the mitochondrial membrane respiratory chain NADH dehydrogenase (Complex I) that is believed to belong to the minimal assembly required for catalysis. Complex I functions in the transfer of electrons from NADH to the respiratory chain. The immediate electron acceptor for the enzyme is believed to be ubiquinone. This is NADH-ubiquinone oxidoreductase chain 3 (MT-ND3) from Paralichthys olivaceus (Bastard halibut).